A 175-amino-acid polypeptide reads, in one-letter code: Methylated-DNA--protein-cysteine methyltransferase (175 aa).

Residues Tyr115 and Arg127 each coordinate DNA. Cys144 functions as the Nucleophile; methyl group acceptor in the catalytic mechanism.

Belongs to the MGMT family.

Its subcellular location is the nucleus. It carries out the reaction a 6-O-methyl-2'-deoxyguanosine in DNA + L-cysteinyl-[protein] = S-methyl-L-cysteinyl-[protein] + a 2'-deoxyguanosine in DNA. It catalyses the reaction a 4-O-methyl-thymidine in DNA + L-cysteinyl-[protein] = a thymidine in DNA + S-methyl-L-cysteinyl-[protein]. Its function is as follows. Involved in the cellular defense against the biological effects of O6-methylguanine (O6-MeG) and O4-methylthymine (O4-MeT) in DNA. Repairs the methylated nucleobase in DNA by stoichiometrically transferring the methyl group to a cysteine residue in the enzyme. This is a suicide reaction: the enzyme is irreversibly inactivated. The protein is Methylated-DNA--protein-cysteine methyltransferase (MGT1) of Candida albicans (strain SC5314 / ATCC MYA-2876) (Yeast).